The sequence spans 85 residues: Small ribosomal subunit protein uS17 (85 aa).

This sequence belongs to the universal ribosomal protein uS17 family. As to quaternary structure, part of the 30S ribosomal subunit.

One of the primary rRNA binding proteins, it binds specifically to the 5'-end of 16S ribosomal RNA. The protein is Small ribosomal subunit protein uS17 of Trichlorobacter lovleyi (strain ATCC BAA-1151 / DSM 17278 / SZ) (Geobacter lovleyi).